A 167-amino-acid polypeptide reads, in one-letter code: CS6 fimbrial subunit B (167 aa).

A signal peptide spans methionine 1–alanine 21.

Its subcellular location is the fimbrium. This Escherichia coli protein is CS6 fimbrial subunit B (cssB).